The following is a 497-amino-acid chain: Protein nucleotidyltransferase YdiU (497 aa).

The ATP site is built by glycine 88, glycine 90, arginine 91, lysine 110, aspartate 122, glycine 123, arginine 173, and arginine 180. Aspartate 249 functions as the Proton acceptor in the catalytic mechanism. 2 residues coordinate Mg(2+): asparagine 250 and aspartate 259. Aspartate 259 lines the ATP pocket. Residues 477–497 (FARYAEPPEGGGRGYRTFCGT) are disordered.

The protein belongs to the SELO family. The cofactor is Mg(2+). Mn(2+) is required as a cofactor.

It catalyses the reaction L-seryl-[protein] + ATP = 3-O-(5'-adenylyl)-L-seryl-[protein] + diphosphate. The catalysed reaction is L-threonyl-[protein] + ATP = 3-O-(5'-adenylyl)-L-threonyl-[protein] + diphosphate. It carries out the reaction L-tyrosyl-[protein] + ATP = O-(5'-adenylyl)-L-tyrosyl-[protein] + diphosphate. The enzyme catalyses L-histidyl-[protein] + UTP = N(tele)-(5'-uridylyl)-L-histidyl-[protein] + diphosphate. It catalyses the reaction L-seryl-[protein] + UTP = O-(5'-uridylyl)-L-seryl-[protein] + diphosphate. The catalysed reaction is L-tyrosyl-[protein] + UTP = O-(5'-uridylyl)-L-tyrosyl-[protein] + diphosphate. In terms of biological role, nucleotidyltransferase involved in the post-translational modification of proteins. It can catalyze the addition of adenosine monophosphate (AMP) or uridine monophosphate (UMP) to a protein, resulting in modifications known as AMPylation and UMPylation. This chain is Protein nucleotidyltransferase YdiU, found in Methylorubrum extorquens (strain PA1) (Methylobacterium extorquens).